A 297-amino-acid polypeptide reads, in one-letter code: Formylmethanofuran--tetrahydromethanopterin formyltransferase (297 aa).

It belongs to the FTR family. In terms of assembly, homotetramer.

The protein resides in the cytoplasm. It carries out the reaction N-formylmethanofuran + 5,6,7,8-tetrahydromethanopterin + H(+) = N(5)-formyl-5,6,7,8-tetrahydromethanopterin + methanofuran. The protein operates within one-carbon metabolism; methanogenesis from CO(2); 5,10-methenyl-5,6,7,8-tetrahydromethanopterin from CO(2): step 2/3. In terms of biological role, catalyzes the reversible transfer of a formyl group from formylmethanofuran (formyl-MFR) to tetrahydromethanopterin (H(4)MPT) to produce 5-formyl tetrahydromethanopterin (5-formyl-H(4)MPT) and methanofuran (MFR). The sequence is that of Formylmethanofuran--tetrahydromethanopterin formyltransferase from Methanothermobacter thermautotrophicus (strain ATCC 29096 / DSM 1053 / JCM 10044 / NBRC 100330 / Delta H) (Methanobacterium thermoautotrophicum).